An 845-amino-acid polypeptide reads, in one-letter code: Protein P (845 aa).

A terminal protein domain (TP) region spans residues 1–179 (MPLSYQHFLK…FCGSPYSWEQ (179 aa)). Residues 180-348 (ELHHGRLVTK…YCLSHLVNLL (169 aa)) form a spacer region. Disordered regions lie at residues 188–211 (TKTS…SRSS) and 288–317 (YSHL…ARSQ). Polar residues-rich tracts occupy residues 199 to 211 (VCSQ…SRSS) and 290 to 301 (HLSTSKRQSSSG). The interval 349–692 (EDWGPCTDHG…YMNLYPVARQ (344 aa)) is polymerase/reverse transcriptase domain (RT). Residues 359–602 (EHHIRIPRTP…YSLNFMGYII (244 aa)) form the Reverse transcriptase domain. Positions 431, 553, and 554 each coordinate Mg(2+).

Belongs to the hepadnaviridae P protein family.

The catalysed reaction is DNA(n) + a 2'-deoxyribonucleoside 5'-triphosphate = DNA(n+1) + diphosphate. The enzyme catalyses Endonucleolytic cleavage to 5'-phosphomonoester.. With respect to regulation, activated by host HSP70 and HSP40 in vitro to be able to bind the epsilon loop of the pgRNA. Because deletion of the RNase H region renders the protein partly chaperone-independent, the chaperones may be needed indirectly to relieve occlusion of the RNA-binding site by this domain. Inhibited by several reverse-transcriptase inhibitors: Lamivudine, Adefovir and Entecavir. In terms of biological role, multifunctional enzyme that converts the viral RNA genome into dsDNA in viral cytoplasmic capsids. This enzyme displays a DNA polymerase activity that can copy either DNA or RNA templates, and a ribonuclease H (RNase H) activity that cleaves the RNA strand of RNA-DNA heteroduplexes in a partially processive 3'- to 5'-endonucleasic mode. Neo-synthesized pregenomic RNA (pgRNA) are encapsidated together with the P protein, and reverse-transcribed inside the nucleocapsid. Initiation of reverse-transcription occurs first by binding the epsilon loop on the pgRNA genome, and is initiated by protein priming, thereby the 5'-end of (-)DNA is covalently linked to P protein. Partial (+)DNA is synthesized from the (-)DNA template and generates the relaxed circular DNA (RC-DNA) genome. After budding and infection, the RC-DNA migrates in the nucleus, and is converted into a plasmid-like covalently closed circular DNA (cccDNA). The activity of P protein does not seem to be necessary for cccDNA generation, and is presumably released from (+)DNA by host nuclear DNA repair machinery. In Homo sapiens (Human), this protein is Protein P.